The sequence spans 547 residues: Cytochrome P450 monooxygenase 128 (547 aa).

A helical transmembrane segment spans residues 9–25 (IPWAAGATLLAWAAYKI). 2 N-linked (GlcNAc...) asparagine glycosylation sites follow: Asn-336 and Asn-438. Cys-483 contributes to the heme binding site.

The protein belongs to the cytochrome P450 family. The cofactor is heme.

It localises to the membrane. It participates in secondary metabolite biosynthesis. In terms of biological role, cytochrome P450 monooxygenase that is able to use 7-ethoxycoumarin and testosterone as substrates for oxidation. The chain is Cytochrome P450 monooxygenase 128 from Postia placenta (strain ATCC 44394 / Madison 698-R) (Brown rot fungus).